Consider the following 163-residue polypeptide: SsrA-binding protein (163 aa).

The protein belongs to the SmpB family.

It is found in the cytoplasm. In terms of biological role, required for rescue of stalled ribosomes mediated by trans-translation. Binds to transfer-messenger RNA (tmRNA), required for stable association of tmRNA with ribosomes. tmRNA and SmpB together mimic tRNA shape, replacing the anticodon stem-loop with SmpB. tmRNA is encoded by the ssrA gene; the 2 termini fold to resemble tRNA(Ala) and it encodes a 'tag peptide', a short internal open reading frame. During trans-translation Ala-aminoacylated tmRNA acts like a tRNA, entering the A-site of stalled ribosomes, displacing the stalled mRNA. The ribosome then switches to translate the ORF on the tmRNA; the nascent peptide is terminated with the 'tag peptide' encoded by the tmRNA and targeted for degradation. The ribosome is freed to recommence translation, which seems to be the essential function of trans-translation. The sequence is that of SsrA-binding protein from Shewanella baltica (strain OS223).